An 81-amino-acid chain; its full sequence is MAVKIRLKRMGAHKKPFYRIVVADARSPRDGRFIEEIGYYNPVSEPKEIKINNEKAEKWLKNGAQPTDTVKDLFKKNGIIE.

This sequence belongs to the bacterial ribosomal protein bS16 family.

The chain is Small ribosomal subunit protein bS16 from Alkaliphilus oremlandii (strain OhILAs) (Clostridium oremlandii (strain OhILAs)).